The following is a 546-amino-acid chain: Glucose-6-phosphate isomerase 1 (546 aa).

The active-site Proton donor is E353. Residues H384 and K512 contribute to the active site.

The protein belongs to the GPI family.

It is found in the cytoplasm. The enzyme catalyses alpha-D-glucose 6-phosphate = beta-D-fructose 6-phosphate. It participates in carbohydrate biosynthesis; gluconeogenesis. The protein operates within carbohydrate degradation; glycolysis; D-glyceraldehyde 3-phosphate and glycerone phosphate from D-glucose: step 2/4. In terms of biological role, catalyzes the reversible isomerization of glucose-6-phosphate to fructose-6-phosphate. The polypeptide is Glucose-6-phosphate isomerase 1 (Colwellia psychrerythraea (strain 34H / ATCC BAA-681) (Vibrio psychroerythus)).